The chain runs to 419 residues: Phosphatidylcholine:ceramide cholinephosphotransferase 1 (419 aa).

Residues 13–76 enclose the SAM domain; that stretch reads WSPKKVADWL…LDMIETLKME (64 aa). Residue Ser14 is modified to Phosphoserine. 5 helical membrane-spanning segments follow: residues 142–162, 190–210, 221–241, 282–302, and 310–330; these read FLAF…ISVV, FSIC…QWLL, FFCI…VTTL, MCGD…YLFI, and LWWY…CILL. His291 is a catalytic residue. The Cytoplasmic portion of the chain corresponds to 331–419; sequence AHDHYTVDVV…VKYSRLVNDT (89 aa). Residues His334 and Asp338 contribute to the active site.

This sequence belongs to the sphingomyelin synthase family. Isoform 1 is widely expressed, isoform 2 shows a more narrow distribution and isoform 3 is detected only in testis and heart.

It is found in the golgi apparatus membrane. It catalyses the reaction an N-acylsphing-4-enine + a 1,2-diacyl-sn-glycero-3-phosphocholine = a sphingomyelin + a 1,2-diacyl-sn-glycerol. The enzyme catalyses 1-(9Z-octadecenoyl)-2-acyl-sn-3-glycerol + a sphingomyelin = a 1-(9Z-octadecenoyl)-2-acyl-sn-glycero-3-phosphocholine + an N-acylsphing-4-enine. The catalysed reaction is N-hexadecanoylsphinganine + a 1,2-diacyl-sn-glycero-3-phosphocholine = N-hexadecanoyl-sphinganine-1-phosphocholine + a 1,2-diacyl-sn-glycerol. It carries out the reaction N-hexadecanoyl-(4R)-hydroxysphinganine + a 1,2-diacyl-sn-glycero-3-phosphocholine = N-hexadecanoyl-(4R)-hydroxysphinganine-phosphocholine + a 1,2-diacyl-sn-glycerol. It catalyses the reaction an N-acylsphing-4-enine + a 1,2-diacyl-sn-glycero-3-phosphoethanolamine = an N-acylsphing-4-enine 1-phosphoethanolamine + a 1,2-diacyl-sn-glycerol. Its pathway is sphingolipid metabolism. Its function is as follows. Major sphingomyelin synthase at the Golgi apparatus. Catalyzes the reversible transfer of phosphocholine moiety in sphingomyelin biosynthesis: in the forward reaction transfers phosphocholine head group of phosphatidylcholine (PC) on to ceramide (CER) to form ceramide phosphocholine (sphingomyelin, SM) and diacylglycerol (DAG) as by-product, and in the reverse reaction transfers phosphocholine from SM to DAG to form PC and CER. The direction of the reaction depends on the levels of CER and DAG in Golgi membranes. Converts the newly synthesized CER, that is transported from the endoplasmic reticulum to the trans-Golgi by the Cer transport protein (CERT), to SM. Can form a heteromeric complex with glucosylceramide synthase (GCS) increasing SMS activity and reducing glucosylceramide synthesis, a critical mechanism that controls the metabolic fate of CER in the Golgi. Does not use free phosphorylcholine or CDP-choline as donor. Can also transfer phosphoethanolamine head group of phosphatidylethanolamine (PE) on to CER to form ceramide phosphoethanolamine (CPE). Regulates receptor-mediated signal transduction via mitogenic DAG and proapoptotic CER, as well as via SM, a structural component of membrane rafts that serve as platforms for signal transduction and protein sorting. Plays a role in secretory transport via regulation of DAG pool at the Golgi apparatus and its downstream effects on PRKD1. (Microbial infection) Contributes to the brain SM production for Japanese encephalitis virus attachment and infection. The polypeptide is Phosphatidylcholine:ceramide cholinephosphotransferase 1 (Sgms1) (Mus musculus (Mouse)).